The chain runs to 448 residues: Chaperone SurA (448 aa).

The first 27 residues, 1–27, serve as a signal peptide directing secretion; that stretch reads MKKTLRFAAVASGLVASLITVAPSASA. PpiC domains lie at 185 to 288 and 301 to 399; these read QQDL…RLVE and IVQT…QVLG.

It localises to the periplasm. The enzyme catalyses [protein]-peptidylproline (omega=180) = [protein]-peptidylproline (omega=0). Functionally, chaperone involved in the correct folding and assembly of outer membrane proteins. Recognizes specific patterns of aromatic residues and the orientation of their side chains, which are found more frequently in integral outer membrane proteins. May act in both early periplasmic and late outer membrane-associated steps of protein maturation. This is Chaperone SurA from Burkholderia mallei (strain ATCC 23344).